The sequence spans 358 residues: Photosystem II protein D1 2 (358 aa).

3 helical membrane passes run 28-45, 117-132, and 141-155; these read YVGWFGVLMIPCLLAATT, HFLIGISAYMGRQWEL, and WICVAYSAPLSAAFA. Histidine 117 is a binding site for chlorophyll a. Position 125 (tyrosine 125) interacts with pheophytin a. The [CaMn4O5] cluster site is built by aspartate 169 and glutamate 188. Residues 196-217 form a helical membrane-spanning segment; sequence FHMLGVAGVFGGSLFSAMHGSL. Residue histidine 197 participates in chlorophyll a binding. Residues histidine 214 and 263 to 264 contribute to the a quinone site; that span reads SF. Histidine 214 is a Fe cation binding site. A Fe cation-binding site is contributed by histidine 271. Residues 273–287 form a helical membrane-spanning segment; sequence FLAAWPVVGIWFTSM. Positions 331, 332, 341, and 343 each coordinate [CaMn4O5] cluster. Positions 344–358 are excised as a propeptide; sequence ATESTPVALQAPTIG.

This sequence belongs to the reaction center PufL/M/PsbA/D family. As to quaternary structure, PSII is composed of 1 copy each of membrane proteins PsbA, PsbB, PsbC, PsbD, PsbE, PsbF, PsbH, PsbI, PsbJ, PsbK, PsbL, PsbM, PsbT, PsbX, PsbY, PsbZ, Psb30/Ycf12, peripheral proteins PsbO, CyanoQ (PsbQ), PsbU, PsbV and a large number of cofactors. It forms dimeric complexes. It depends on The D1/D2 heterodimer binds P680, chlorophylls that are the primary electron donor of PSII, and subsequent electron acceptors. It shares a non-heme iron and each subunit binds pheophytin, quinone, additional chlorophylls, carotenoids and lipids. D1 provides most of the ligands for the Mn4-Ca-O5 cluster of the oxygen-evolving complex (OEC). There is also a Cl(-1) ion associated with D1 and D2, which is required for oxygen evolution. The PSII complex binds additional chlorophylls, carotenoids and specific lipids. as a cofactor. Post-translationally, tyr-160 forms a radical intermediate that is referred to as redox-active TyrZ, YZ or Y-Z. C-terminally processed by CtpA; processing is essential to allow assembly of the oxygen-evolving complex and thus photosynthetic growth.

It is found in the cellular thylakoid membrane. It catalyses the reaction 2 a plastoquinone + 4 hnu + 2 H2O = 2 a plastoquinol + O2. Its function is as follows. Photosystem II (PSII) is a light-driven water:plastoquinone oxidoreductase that uses light energy to abstract electrons from H(2)O, generating O(2) and a proton gradient subsequently used for ATP formation. It consists of a core antenna complex that captures photons, and an electron transfer chain that converts photonic excitation into a charge separation. The D1/D2 (PsbA/PsbD) reaction center heterodimer binds P680, the primary electron donor of PSII as well as several subsequent electron acceptors. This chain is Photosystem II protein D1 2, found in Synechococcus sp. (strain WH7803).